Consider the following 404-residue polypeptide: Cysteine desulfurase IscS (404 aa).

Residues 75 to 76, N155, Q183, and 203 to 205 each bind pyridoxal 5'-phosphate; these read AT and SGH. K206 bears the N6-(pyridoxal phosphate)lysine mark. T243 contacts pyridoxal 5'-phosphate. C328 (cysteine persulfide intermediate) is an active-site residue. C328 is a binding site for [2Fe-2S] cluster.

Belongs to the class-V pyridoxal-phosphate-dependent aminotransferase family. NifS/IscS subfamily. Homodimer. Forms a heterotetramer with IscU, interacts with other sulfur acceptors. Pyridoxal 5'-phosphate is required as a cofactor.

It localises to the cytoplasm. It carries out the reaction (sulfur carrier)-H + L-cysteine = (sulfur carrier)-SH + L-alanine. The protein operates within cofactor biosynthesis; iron-sulfur cluster biosynthesis. In terms of biological role, master enzyme that delivers sulfur to a number of partners involved in Fe-S cluster assembly, tRNA modification or cofactor biosynthesis. Catalyzes the removal of elemental sulfur atoms from cysteine to produce alanine. Functions as a sulfur delivery protein for Fe-S cluster synthesis onto IscU, an Fe-S scaffold assembly protein, as well as other S acceptor proteins. The polypeptide is Cysteine desulfurase IscS (Shewanella halifaxensis (strain HAW-EB4)).